A 197-amino-acid polypeptide reads, in one-letter code: UPF0215 protein MK0057 (197 aa).

The protein belongs to the UPF0215 family.

The polypeptide is UPF0215 protein MK0057 (Methanopyrus kandleri (strain AV19 / DSM 6324 / JCM 9639 / NBRC 100938)).